A 204-amino-acid polypeptide reads, in one-letter code: Venom allergen 5 (204 aa).

4 disulfides stabilise this stretch: cysteine 4–cysteine 17, cysteine 8–cysteine 101, cysteine 26–cysteine 94, and cysteine 170–cysteine 187. The region spanning 45–189 (LKEHNDFRQK…WHKHYLVCNY (145 aa)) is the SCP domain.

The protein belongs to the CRISP family. Venom allergen 5-like subfamily. As to expression, expressed by the venom gland.

The protein resides in the secreted. Its function is as follows. May have an ancestral function in the promotion of ovum fertilization by sperm. This Vespula flavopilosa (Downy yellowjacket) protein is Venom allergen 5.